A 275-amino-acid chain; its full sequence is uncharacterized protein (275 aa).

Disordered regions lie at residues 1 to 25 (MIGG…DQEQ) and 185 to 275 (QRGE…RHHM). Residues 228-239 (KPGDGEENAKDD) are compositionally biased toward basic and acidic residues.

This is an uncharacterized protein from Neurospora crassa (strain ATCC 24698 / 74-OR23-1A / CBS 708.71 / DSM 1257 / FGSC 987).